The chain runs to 67 residues: DNA-directed RNA polymerase subunit omega (67 aa).

It belongs to the RNA polymerase subunit omega family. As to quaternary structure, the RNAP catalytic core consists of 2 alpha, 1 beta, 1 beta' and 1 omega subunit. When a sigma factor is associated with the core the holoenzyme is formed, which can initiate transcription.

It catalyses the reaction RNA(n) + a ribonucleoside 5'-triphosphate = RNA(n+1) + diphosphate. Promotes RNA polymerase assembly. Latches the N- and C-terminal regions of the beta' subunit thereby facilitating its interaction with the beta and alpha subunits. The protein is DNA-directed RNA polymerase subunit omega of Nautilia profundicola (strain ATCC BAA-1463 / DSM 18972 / AmH).